A 117-amino-acid polypeptide reads, in one-letter code: Holo-[acyl-carrier-protein] synthase (117 aa).

Residues Asp-6 and Glu-55 each contribute to the Mg(2+) site.

The protein belongs to the P-Pant transferase superfamily. AcpS family. Mg(2+) serves as cofactor.

The protein localises to the cytoplasm. The catalysed reaction is apo-[ACP] + CoA = holo-[ACP] + adenosine 3',5'-bisphosphate + H(+). Its function is as follows. Transfers the 4'-phosphopantetheine moiety from coenzyme A to a Ser of acyl-carrier-protein. The protein is Holo-[acyl-carrier-protein] synthase of Chlorobaculum tepidum (strain ATCC 49652 / DSM 12025 / NBRC 103806 / TLS) (Chlorobium tepidum).